We begin with the raw amino-acid sequence, 124 residues long: Large ribosomal subunit protein bL12 (124 aa).

The protein belongs to the bacterial ribosomal protein bL12 family. In terms of assembly, homodimer. Part of the ribosomal stalk of the 50S ribosomal subunit. Forms a multimeric L10(L12)X complex, where L10 forms an elongated spine to which 2 to 4 L12 dimers bind in a sequential fashion. Binds GTP-bound translation factors.

Its function is as follows. Forms part of the ribosomal stalk which helps the ribosome interact with GTP-bound translation factors. Is thus essential for accurate translation. The chain is Large ribosomal subunit protein bL12 from Christiangramia forsetii (strain DSM 17595 / CGMCC 1.15422 / KT0803) (Gramella forsetii).